Consider the following 266-residue polypeptide: Glucagon-1 (266 aa).

The first 20 residues, 1 to 20, serve as a signal peptide directing secretion; it reads MKSTCYMIGILLMILQNTYQ. 6 propeptides span residues 21–50, 84–95, 136–140, 175–178, 213–224, and 261–266; these read SPVP…LKEV, SGELSRRNADYE, NAEFE, IRYS, NFSEVHSVEEMD, and DLLEEQ. The segment covering 23 to 32 has biased composition (polar residues); the sequence is VPETDANSRS. The interval 23-44 is disordered; it reads VPETDANSRSVKAARNEAVDDS.

Belongs to the glucagon family.

It localises to the secreted. Promotes hydrolysis of glycogen and lipids, and raises the blood sugar level. This is Glucagon-1 (gcg1) from Xenopus laevis (African clawed frog).